Reading from the N-terminus, the 879-residue chain is Alanine--tRNA ligase (879 aa).

Residues histidine 566, histidine 570, cysteine 668, and histidine 672 each contribute to the Zn(2+) site.

It belongs to the class-II aminoacyl-tRNA synthetase family. Zn(2+) serves as cofactor.

The protein resides in the cytoplasm. It carries out the reaction tRNA(Ala) + L-alanine + ATP = L-alanyl-tRNA(Ala) + AMP + diphosphate. Functionally, catalyzes the attachment of alanine to tRNA(Ala) in a two-step reaction: alanine is first activated by ATP to form Ala-AMP and then transferred to the acceptor end of tRNA(Ala). Also edits incorrectly charged Ser-tRNA(Ala) and Gly-tRNA(Ala) via its editing domain. The chain is Alanine--tRNA ligase from Clostridium botulinum (strain Hall / ATCC 3502 / NCTC 13319 / Type A).